Consider the following 851-residue polypeptide: Beta-galactosidase 3 (851 aa).

The N-terminal stretch at 1 to 29 (MAGASSYFSLRRLLLLLLPLVPLLGATTA) is a signal peptide. A glycan (N-linked (GlcNAc...) asparagine) is linked at Asn-35. Glu-194 serves as the catalytic Proton donor. Glu-263 acts as the Nucleophile in catalysis. N-linked (GlcNAc...) asparagine glycans are attached at residues Asn-361, Asn-475, Asn-528, and Asn-533. Residues 765 to 851 (GRDAAKVQLS…KTLAIEADCS (87 aa)) enclose the SUEL-type lectin domain.

The protein belongs to the glycosyl hydrolase 35 family.

It localises to the secreted. It is found in the extracellular space. The protein resides in the apoplast. It catalyses the reaction Hydrolysis of terminal non-reducing beta-D-galactose residues in beta-D-galactosides.. The sequence is that of Beta-galactosidase 3 from Oryza sativa subsp. japonica (Rice).